Consider the following 350-residue polypeptide: Flap endonuclease 1 (350 aa).

The segment at 1–102 (MGVTELGKLI…IEIEKRRRVR (102 aa)) is N-domain. Mg(2+) is bound by residues Asp31, Asp84, Glu156, Glu158, Asp177, Asp179, and Asp241. Residues 120–263 (EARKYAQRAL…RALRLIQEYG (144 aa)) are I-domain.

This sequence belongs to the XPG/RAD2 endonuclease family. FEN1 subfamily. In terms of assembly, interacts with PCNA. PCNA stimulates the nuclease activity without altering cleavage specificity. Mg(2+) serves as cofactor.

Functionally, structure-specific nuclease with 5'-flap endonuclease and 5'-3' exonuclease activities involved in DNA replication and repair. During DNA replication, cleaves the 5'-overhanging flap structure that is generated by displacement synthesis when DNA polymerase encounters the 5'-end of a downstream Okazaki fragment. Binds the unpaired 3'-DNA end and kinks the DNA to facilitate 5' cleavage specificity. Cleaves one nucleotide into the double-stranded DNA from the junction in flap DNA, leaving a nick for ligation. Also involved in the base excision repair (BER) pathway. Acts as a genome stabilization factor that prevents flaps from equilibrating into structures that lead to duplications and deletions. Also possesses 5'-3' exonuclease activity on nicked or gapped double-stranded DNA. The sequence is that of Flap endonuclease 1 from Caldivirga maquilingensis (strain ATCC 700844 / DSM 13496 / JCM 10307 / IC-167).